The following is a 261-amino-acid chain: 4-phosphopantoate--beta-alanine ligase (261 aa).

Residues Arg17, Arg39, 181 to 182 (DL), 187 to 188 (RS), and 199 to 200 (NI) contribute to the ATP site.

The protein belongs to the archaeal phosphopantothenate synthetase family. In terms of assembly, homodimer.

It catalyses the reaction (R)-4-phosphopantoate + beta-alanine + ATP = (R)-4'-phosphopantothenate + AMP + diphosphate + H(+). The protein operates within cofactor biosynthesis; coenzyme A biosynthesis. Functionally, catalyzes the condensation of (R)-4-phosphopantoate and beta-alanine to 4'-phosphopantothenate in the CoA biosynthesis pathway. In Thermococcus onnurineus (strain NA1), this protein is 4-phosphopantoate--beta-alanine ligase.